The following is a 145-amino-acid chain: Cytochrome b (145 aa).

A helical transmembrane segment spans residues 38–58 (FFALHFLLPFVLAALALMHLI). Heme b contacts are provided by His-42 and His-56. His-61 lines the a ubiquinone pocket. Residues 85–105 (FIFKDLVTIFIFFIVLSIFVF) traverse the membrane as a helical segment.

The protein belongs to the cytochrome b family. As to quaternary structure, fungal cytochrome b-c1 complex contains 10 subunits; 3 respiratory subunits, 2 core proteins and 5 low-molecular weight proteins. Cytochrome b-c1 complex is a homodimer. The cofactor is heme b.

The protein localises to the mitochondrion inner membrane. Component of the ubiquinol-cytochrome c reductase complex (complex III or cytochrome b-c1 complex) that is part of the mitochondrial respiratory chain. The b-c1 complex mediates electron transfer from ubiquinol to cytochrome c. Contributes to the generation of a proton gradient across the mitochondrial membrane that is then used for ATP synthesis. The protein is Cytochrome b (cob) of Aspergillus flavus.